The chain runs to 340 residues: Myb-related protein Zm1 (340 aa).

HTH myb-type domains lie at 11–63 (KVGL…INYL) and 64–118 (RPDL…KKKV). 2 consecutive DNA-binding regions (H-T-H motif) follow at residues 39 to 63 (WRAL…INYL) and 91 to 114 (WSKI…NTHL). Positions 116–126 (KKVAQREKKKA) are enriched in basic residues. Disordered regions lie at residues 116–173 (KKVA…DATD) and 190–209 (DGAP…SSLT). The span at 133 to 166 (AGTPATAPLSSATSSTTTHNSSGGSDSGDQCGTS) shows a compositional bias: low complexity.

It is found in the nucleus. Transcription factor that positively regulates genes involved in anthocyanin biosynthesis such as A1. This Zea mays (Maize) protein is Myb-related protein Zm1.